We begin with the raw amino-acid sequence, 213 residues long: ATP-dependent dethiobiotin synthetase BioD (213 aa).

13–18 is an ATP binding site; that stretch reads GIGKTV. Position 17 (threonine 17) interacts with Mg(2+). Residue lysine 33 is part of the active site. Glutamate 100 is a binding site for Mg(2+). ATP is bound by residues 100–103 and 184–186; these read EGAG and PHL.

This sequence belongs to the dethiobiotin synthetase family. In terms of assembly, homodimer. Mg(2+) serves as cofactor.

It is found in the cytoplasm. It catalyses the reaction (7R,8S)-7,8-diammoniononanoate + CO2 + ATP = (4R,5S)-dethiobiotin + ADP + phosphate + 3 H(+). Its pathway is cofactor biosynthesis; biotin biosynthesis; biotin from 7,8-diaminononanoate: step 1/2. Functionally, catalyzes a mechanistically unusual reaction, the ATP-dependent insertion of CO2 between the N7 and N8 nitrogen atoms of 7,8-diaminopelargonic acid (DAPA, also called 7,8-diammoniononanoate) to form a ureido ring. In Rhodopseudomonas palustris (strain BisA53), this protein is ATP-dependent dethiobiotin synthetase BioD.